The chain runs to 391 residues: Trehalose-phosphate phosphatase (391 aa).

Residue Asp-147 is the Nucleophile of the active site. Mg(2+) contacts are provided by Asp-147, Asp-149, and Asp-330. 147 to 149 (DFD) is a binding site for substrate.

Belongs to the trehalose phosphatase family. It depends on Mg(2+) as a cofactor.

The catalysed reaction is alpha,alpha-trehalose 6-phosphate + H2O = alpha,alpha-trehalose + phosphate. Its pathway is glycan biosynthesis; trehalose biosynthesis. Removes the phosphate from trehalose 6-phosphate to produce free trehalose. The polypeptide is Trehalose-phosphate phosphatase (otsB) (Mycobacterium avium (strain 104)).